A 395-amino-acid chain; its full sequence is Flap endonuclease 1 (395 aa).

Residues 1-104 (MGIKHLYQII…GELAKRIARK (104 aa)) form an N-domain region. Residue D34 participates in Mg(2+) binding. DNA is bound by residues R47 and R70. D86 serves as a coordination point for Mg(2+). Residues 103 to 123 (RKQEAAEQHEEAKETGTTEDV) form a disordered region. The I-domain stretch occupies residues 122–253 (DVEKFSRRTV…NTALKLIRDH (132 aa)). Mg(2+) is bound by residues E158, E160, D179, and D181. Position 158 (E158) interacts with DNA. 2 residues coordinate DNA: G231 and D233. Mg(2+) is bound at residue D233. The interval 341–349 (QQSRLEGFF) is interaction with PCNA. The segment covering 356–389 (DEEKASLKRKHEEKLEAAKKKKKEDAKAKREAKS) has biased composition (basic and acidic residues). The interval 356-395 (DEEKASLKRKHEEKLEAAKKKKKEDAKAKREAKSRPKGTA) is disordered.

This sequence belongs to the XPG/RAD2 endonuclease family. FEN1 subfamily. Interacts with PCNA. Three molecules of FEN1 bind to one PCNA trimer with each molecule binding to one PCNA monomer. PCNA stimulates the nuclease activity without altering cleavage specificity. Mg(2+) serves as cofactor. In terms of processing, phosphorylated. Phosphorylation upon DNA damage induces relocalization to the nuclear plasma.

The protein localises to the nucleus. It is found in the nucleolus. The protein resides in the nucleoplasm. Its subcellular location is the mitochondrion. Functionally, structure-specific nuclease with 5'-flap endonuclease and 5'-3' exonuclease activities involved in DNA replication and repair. During DNA replication, cleaves the 5'-overhanging flap structure that is generated by displacement synthesis when DNA polymerase encounters the 5'-end of a downstream Okazaki fragment. It enters the flap from the 5'-end and then tracks to cleave the flap base, leaving a nick for ligation. Also involved in the long patch base excision repair (LP-BER) pathway, by cleaving within the apurinic/apyrimidinic (AP) site-terminated flap. Acts as a genome stabilization factor that prevents flaps from equilibrating into structures that lead to duplications and deletions. Also possesses 5'-3' exonuclease activity on nicked or gapped double-stranded DNA, and exhibits RNase H activity. Also involved in replication and repair of rDNA and in repairing mitochondrial DNA. The polypeptide is Flap endonuclease 1 (Uncinocarpus reesii (strain UAMH 1704)).